Consider the following 250-residue polypeptide: Ribosomal RNA small subunit methyltransferase J (250 aa).

S-adenosyl-L-methionine-binding positions include 96-97 and Asp168; that span reads RD.

This sequence belongs to the methyltransferase superfamily. RsmJ family.

The protein localises to the cytoplasm. It carries out the reaction guanosine(1516) in 16S rRNA + S-adenosyl-L-methionine = N(2)-methylguanosine(1516) in 16S rRNA + S-adenosyl-L-homocysteine + H(+). Its function is as follows. Specifically methylates the guanosine in position 1516 of 16S rRNA. The polypeptide is Ribosomal RNA small subunit methyltransferase J (Neisseria meningitidis serogroup C / serotype 2a (strain ATCC 700532 / DSM 15464 / FAM18)).